The chain runs to 594 residues: Dictomallein-4 (594 aa).

An N-terminal signal peptide occupies residues 1–18 (MKLVLIFLIINFLLIINC). In terms of domain architecture, Peptidase M66 spans 147–408 (PDVSQDYTLK…QNYFKNSIYY (262 aa)). A Zn(2+)-binding site is contributed by histidine 300. Residue glutamate 301 is part of the active site. Positions 304 and 310 each coordinate Zn(2+).

It belongs to the dictomallein family. Zn(2+) serves as cofactor.

It localises to the secreted. In Dictyostelium discoideum (Social amoeba), this protein is Dictomallein-4 (dtmlD).